A 66-amino-acid polypeptide reads, in one-letter code: Protein I177L (66 aa).

This sequence belongs to the asfivirus I177L family.

It localises to the virion. This chain is Protein I177L, found in Ornithodoros (relapsing fever ticks).